Consider the following 428-residue polypeptide: 4-hydroxy-3-methylbut-2-en-1-yl diphosphate synthase (flavodoxin) (428 aa).

Cys300, Cys303, Cys346, and Glu353 together coordinate [4Fe-4S] cluster.

The protein belongs to the IspG family. The cofactor is [4Fe-4S] cluster.

It carries out the reaction (2E)-4-hydroxy-3-methylbut-2-enyl diphosphate + oxidized [flavodoxin] + H2O + 2 H(+) = 2-C-methyl-D-erythritol 2,4-cyclic diphosphate + reduced [flavodoxin]. The protein operates within isoprenoid biosynthesis; isopentenyl diphosphate biosynthesis via DXP pathway; isopentenyl diphosphate from 1-deoxy-D-xylulose 5-phosphate: step 5/6. Its function is as follows. Converts 2C-methyl-D-erythritol 2,4-cyclodiphosphate (ME-2,4cPP) into 1-hydroxy-2-methyl-2-(E)-butenyl 4-diphosphate. This Methylobacillus flagellatus (strain ATCC 51484 / DSM 6875 / VKM B-1610 / KT) protein is 4-hydroxy-3-methylbut-2-en-1-yl diphosphate synthase (flavodoxin).